The chain runs to 338 residues: MKNSADITVLGAGSYGTALAISLASNGHKTLLWGHDPVHMQTLAQDKCNQAFLPDIAFPDCLQIEADLAKALAASNNVLVVVPSHVFGTVLEQAKPLLRSDARIVWATKGLEPETGRLLQDVARDVLGEQYPLAVLSGPTFAKELAMGLPTAISVAGTCPQFTEDLVELLHSPKRLRVYANDDFTGLQLGGAVKNVIAIGAGMSDGIGFGANARTALITRGLVELTRLGEALGASTATFMGMAGLGDLVLTCTDNQSRNRRFGLALGKGCDVMTAQAEIGQVVEGYRNTKEVFTLAKRLGVEMPITEQIYQVLYQGKSPVDAAKELLGREKKSETPTQ.

NADPH is bound by residues S14, Y15, H35, and K109. Sn-glycerol 3-phosphate contacts are provided by K109, G138, and T140. A142 provides a ligand contact to NADPH. Residues K194, D247, S257, R258, and N259 each contribute to the sn-glycerol 3-phosphate site. The Proton acceptor role is filled by K194. An NADPH-binding site is contributed by R258. NADPH-binding residues include V282 and E284.

Belongs to the NAD-dependent glycerol-3-phosphate dehydrogenase family.

The protein localises to the cytoplasm. The enzyme catalyses sn-glycerol 3-phosphate + NAD(+) = dihydroxyacetone phosphate + NADH + H(+). It catalyses the reaction sn-glycerol 3-phosphate + NADP(+) = dihydroxyacetone phosphate + NADPH + H(+). It participates in membrane lipid metabolism; glycerophospholipid metabolism. Catalyzes the reduction of the glycolytic intermediate dihydroxyacetone phosphate (DHAP) to sn-glycerol 3-phosphate (G3P), the key precursor for phospholipid synthesis. This chain is Glycerol-3-phosphate dehydrogenase [NAD(P)+], found in Shewanella putrefaciens (strain CN-32 / ATCC BAA-453).